The sequence spans 244 residues: Phosphoadenosine 5'-phosphosulfate reductase (244 aa).

Cysteine 239 serves as the catalytic Nucleophile; cysteine thiosulfonate intermediate.

This sequence belongs to the PAPS reductase family. CysH subfamily.

The protein localises to the cytoplasm. The enzyme catalyses [thioredoxin]-disulfide + sulfite + adenosine 3',5'-bisphosphate + 2 H(+) = [thioredoxin]-dithiol + 3'-phosphoadenylyl sulfate. It functions in the pathway sulfur metabolism; hydrogen sulfide biosynthesis; sulfite from sulfate: step 3/3. In terms of biological role, catalyzes the formation of sulfite from phosphoadenosine 5'-phosphosulfate (PAPS) using thioredoxin as an electron donor. The polypeptide is Phosphoadenosine 5'-phosphosulfate reductase (Enterobacter sp. (strain 638)).